The following is a 264-amino-acid chain: Probable amino-acid-binding protein YxeM (264 aa).

The first 20 residues, 1-20 (MKMKKWTVLVVAALLAVLSA), serve as a signal peptide directing secretion. The N-palmitoyl cysteine moiety is linked to residue cysteine 21. Cysteine 21 carries the S-diacylglycerol cysteine lipid modification.

Belongs to the bacterial solute-binding protein 3 family. In terms of assembly, the complex is composed of two ATP-binding proteins (YxeO), two transmembrane proteins (YxeN) and a solute-binding protein (YxeM).

The protein resides in the cell membrane. It is found in the membrane raft. Functionally, probably part of the ABC transporter complex YxeMNO that could be involved in amino-acid import. May transport S-methylcysteine. This chain is Probable amino-acid-binding protein YxeM (yxeM), found in Bacillus subtilis (strain 168).